Consider the following 63-residue polypeptide: MAHPKRRISRSRRDKRRAQYNAKTKAPAVATCPVTGQSHHSHRAYWFEGSLYFKGRVVMTKEK.

Basic residues predominate over residues Met1–Ala18. The tract at residues Met1–Pro27 is disordered.

Belongs to the bacterial ribosomal protein bL32 family.

The chain is Large ribosomal subunit protein bL32 from Chloroherpeton thalassium (strain ATCC 35110 / GB-78).